Reading from the N-terminus, the 236-residue chain is Chaperone protein TorD (236 aa).

Belongs to the TorD/DmsD family. TorD subfamily.

The protein localises to the cytoplasm. Its function is as follows. Involved in the biogenesis of TorA. Acts on TorA before the insertion of the molybdenum cofactor and, as a result, probably favors a conformation of the apoenzyme that is competent for acquiring the cofactor. The protein is Chaperone protein TorD of Colwellia psychrerythraea (strain 34H / ATCC BAA-681) (Vibrio psychroerythus).